Reading from the N-terminus, the 355-residue chain is Anthranilate phosphoribosyltransferase (355 aa).

Residues Gly102, Gly105–Asp106, Ser110, Asn112–Thr115, Lys130–Ser138, and Ser142 each bind 5-phospho-alpha-D-ribose 1-diphosphate. Gly102 is an anthranilate binding site. Ser114 is a Mg(2+) binding site. Asn133 lines the anthranilate pocket. An anthranilate-binding site is contributed by Arg188. Positions 246 and 247 each coordinate Mg(2+).

This sequence belongs to the anthranilate phosphoribosyltransferase family. As to quaternary structure, homodimer. It depends on Mg(2+) as a cofactor.

The catalysed reaction is N-(5-phospho-beta-D-ribosyl)anthranilate + diphosphate = 5-phospho-alpha-D-ribose 1-diphosphate + anthranilate. The protein operates within amino-acid biosynthesis; L-tryptophan biosynthesis; L-tryptophan from chorismate: step 2/5. In terms of biological role, catalyzes the transfer of the phosphoribosyl group of 5-phosphorylribose-1-pyrophosphate (PRPP) to anthranilate to yield N-(5'-phosphoribosyl)-anthranilate (PRA). This Pectobacterium carotovorum subsp. carotovorum (strain PC1) protein is Anthranilate phosphoribosyltransferase.